The sequence spans 183 residues: Dual-action ribosomal maturation protein DarP (183 aa).

This sequence belongs to the DarP family.

It localises to the cytoplasm. Functionally, member of a network of 50S ribosomal subunit biogenesis factors which assembles along the 30S-50S interface, preventing incorrect 23S rRNA structures from forming. Promotes peptidyl transferase center (PTC) maturation. The polypeptide is Dual-action ribosomal maturation protein DarP (Escherichia coli O7:K1 (strain IAI39 / ExPEC)).